The chain runs to 181 residues: 3-hexulose-6-phosphate isomerase (181 aa).

The SIS domain occupies 27-168 (ILSLVDAAGR…IAKLVDQKGL (142 aa)). Residues Ser45 and 84–89 (SGSGST) contribute to the substrate site. The Proton acceptor role is filled by Glu148.

The protein belongs to the SIS family. PHI subfamily. Homodimer.

It catalyses the reaction D-arabino-hex-3-ulose 6-phosphate = beta-D-fructose 6-phosphate. It functions in the pathway one-carbon metabolism; formaldehyde assimilation via RuMP pathway; D-fructose 6-phosphate from D-ribulose 5-phosphate and formaldehyde: step 2/2. Catalyzes the isomerization between 3-hexulose 6-phosphate and fructose 6-phosphate. This chain is 3-hexulose-6-phosphate isomerase (rmpB), found in Methylomonas aminofaciens.